The sequence spans 257 residues: 1-(5-phosphoribosyl)-5-[(5-phosphoribosylamino)methylideneamino] imidazole-4-carboxamide isomerase (257 aa).

Asp8 serves as the catalytic Proton acceptor. Asp129 acts as the Proton donor in catalysis.

Belongs to the HisA/HisF family.

The protein resides in the cytoplasm. It carries out the reaction 1-(5-phospho-beta-D-ribosyl)-5-[(5-phospho-beta-D-ribosylamino)methylideneamino]imidazole-4-carboxamide = 5-[(5-phospho-1-deoxy-D-ribulos-1-ylimino)methylamino]-1-(5-phospho-beta-D-ribosyl)imidazole-4-carboxamide. Its pathway is amino-acid biosynthesis; L-histidine biosynthesis; L-histidine from 5-phospho-alpha-D-ribose 1-diphosphate: step 4/9. The polypeptide is 1-(5-phosphoribosyl)-5-[(5-phosphoribosylamino)methylideneamino] imidazole-4-carboxamide isomerase (Gloeothece citriformis (strain PCC 7424) (Cyanothece sp. (strain PCC 7424))).